Consider the following 67-residue polypeptide: Small ribosomal subunit protein eS31 (67 aa).

The Zn(2+) site is built by C31, C34, C49, and C52. The C4-type zinc-finger motif lies at 31-52 (CPKCGAGVFMAEHLNRFACGKC).

This sequence belongs to the eukaryotic ribosomal protein eS31 family. In terms of assembly, part of the 30S ribosomal subunit. The cofactor is Zn(2+).

The sequence is that of Small ribosomal subunit protein eS31 from Methanococcus maripaludis (strain C7 / ATCC BAA-1331).